The sequence spans 473 residues: Serine/threonine-protein phosphatase 2A activator 1 (473 aa).

Residues 360–473 are disordered; sequence NAVPPPTSAH…HVPTKAPWAK (114 aa). Residues 368-378 show a composition bias toward polar residues; it reads AHMSTTQSQSR. Low complexity predominate over residues 395-416; the sequence is APWATATQAAPPAGAGTAAPWA.

The protein belongs to the PTPA-type PPIase family.

It is found in the cytoplasm. The protein resides in the nucleus. The catalysed reaction is [protein]-peptidylproline (omega=180) = [protein]-peptidylproline (omega=0). Its function is as follows. PPIases accelerate the folding of proteins. It catalyzes the cis-trans isomerization of proline imidic peptide bonds in oligopeptides. Acts as a regulatory subunit for PP2A-like phosphatases modulating their activity or substrate specificity, probably by inducing a conformational change in the catalytic subunit, a direct target of the PPIase. Can reactivate inactive phosphatase PP2A-phosphatase methylesterase complexes (PP2Ai) in presence of ATP and Mg(2+) by dissociating the inactive form from the complex. This Aspergillus fumigatus (strain ATCC MYA-4609 / CBS 101355 / FGSC A1100 / Af293) (Neosartorya fumigata) protein is Serine/threonine-protein phosphatase 2A activator 1 (rrd1).